A 459-amino-acid chain; its full sequence is Putrescine aminotransferase (459 aa).

Pyridoxal 5'-phosphate contacts are provided by residues 150–151 (GT) and Q274. Position 300 is an N6-(pyridoxal phosphate)lysine (K300). T332 lines the pyridoxal 5'-phosphate pocket.

This sequence belongs to the class-III pyridoxal-phosphate-dependent aminotransferase family. Putrescine aminotransferase subfamily. Pyridoxal 5'-phosphate serves as cofactor.

It carries out the reaction an alkane-alpha,omega-diamine + 2-oxoglutarate = an omega-aminoaldehyde + L-glutamate. It catalyses the reaction putrescine + 2-oxoglutarate = 1-pyrroline + L-glutamate + H2O. The enzyme catalyses cadaverine + 2-oxoglutarate = 5-aminopentanal + L-glutamate. It functions in the pathway amine and polyamine degradation; putrescine degradation; 4-aminobutanal from putrescine (transaminase route): step 1/1. In terms of biological role, catalyzes the aminotransferase reaction from putrescine to 2-oxoglutarate, leading to glutamate and 4-aminobutanal, which spontaneously cyclizes to form 1-pyrroline. This is the first step in one of two pathways for putrescine degradation, where putrescine is converted into 4-aminobutanoate (gamma-aminobutyrate or GABA) via 4-aminobutanal. Also functions as a cadaverine transaminase in a a L-lysine degradation pathway to succinate that proceeds via cadaverine, glutarate and L-2-hydroxyglutarate. This Escherichia coli O8 (strain IAI1) protein is Putrescine aminotransferase.